The sequence spans 185 residues: dCTP deaminase (185 aa).

Residues 107-112 (KSTYAR), 131-133 (TLE), Gln-152, Tyr-166, and Gln-176 contribute to the dCTP site. Residue Glu-133 is the Proton donor/acceptor of the active site.

The protein belongs to the dCTP deaminase family. Homotrimer.

The enzyme catalyses dCTP + H2O + H(+) = dUTP + NH4(+). The protein operates within pyrimidine metabolism; dUMP biosynthesis; dUMP from dCTP (dUTP route): step 1/2. In terms of biological role, catalyzes the deamination of dCTP to dUTP. The sequence is that of dCTP deaminase from Wolbachia pipientis wMel.